We begin with the raw amino-acid sequence, 240 residues long: MNKKILVVDDEESIVTLLQYNLERSGYDVITASDGEEALKKAETEKPDLIVLDVMLPKLDGIEVCKQLRQQKLMFPILMLTAKDEEFDKVLGLELGADDYMTKPFSPREVNARVKAILRRSEIAAPSSEMKNDEMEGQIVIGDLKILPDHYEAYFKESQLELTPKEFELLLYLGRHKGRVLTRDLLLSAVWNYDFAGDTRIVDVHISHLRDKIENNTKKPIYIKTIRGLGYKLEEPKMNE.

Residues 4–118 form the Response regulatory domain; sequence KILVVDDEES…EVNARVKAIL (115 aa). 4-aspartylphosphate is present on Asp-53. The ompR/PhoB-type DNA-binding region spans 136-235; sequence EGQIVIGDLK…IRGLGYKLEE (100 aa).

In terms of processing, phosphorylated by PhoR.

The protein resides in the cytoplasm. Member of the two-component regulatory system PhoP/PhoR involved in the regulation of alkaline phosphatase genes phoA and phoB and of phosphodiesterase. The protein is Alkaline phosphatase synthesis transcriptional regulatory protein PhoP (phoP) of Bacillus subtilis (strain 168).